The chain runs to 633 residues: Pollen receptor-like kinase 3 (633 aa).

The first 19 residues, 1–19 (MTAVLFLCFLLICFSFTPS), serve as a signal peptide directing secretion. Asn22 and Asn37 each carry an N-linked (GlcNAc...) asparagine glycan. The cysteines at positions 53 and 62 are disulfide-linked. 5 LRR repeats span residues 90-115 (LPNL…KLPG), 117-137 (KSLL…FFKE), 138-162 (TPQL…LMQL), 163-186 (AGLE…TDGN), and 188-210 (VLKS…ISDR). N-linked (GlcNAc...) asparagine glycosylation occurs at Asn123. Cys224 and Cys232 are oxidised to a cystine. Asn246 carries an N-linked (GlcNAc...) asparagine glycan. The helical transmembrane segment at 249–269 (AKAIFMVILFLLIFLFVVAII) threads the bilayer. Over residues 294–314 (VEVRVPDSIKKPIDSSKKRSN) the composition is skewed to basic and acidic residues. A disordered region spans residues 294 to 339 (VEVRVPDSIKKPIDSSKKRSNAEGSSKKGSSHNGKGAGGGPGSGMG). The segment covering 328 to 338 (KGAGGGPGSGM) has biased composition (gly residues). The Protein kinase domain occupies 358-633 (KAAAEVLGNG…IVRRIERVTL (276 aa)). Residues 364 to 372 (LGNGSLGSA) and Lys386 contribute to the ATP site. Phosphoserine is present on Ser438. Residue Thr458 is modified to Phosphothreonine. Phosphoserine is present on Ser535.

The protein belongs to the protein kinase superfamily. Ser/Thr protein kinase family. As to quaternary structure, interacts in vitro with ROPGEF1 (via PRONE domain). Interacts with PRK6. In terms of tissue distribution, expressed in pollen and/or in flowers, but not in leaves.

It localises to the membrane. It carries out the reaction L-seryl-[protein] + ATP = O-phospho-L-seryl-[protein] + ADP + H(+). The enzyme catalyses L-threonyl-[protein] + ATP = O-phospho-L-threonyl-[protein] + ADP + H(+). The phosphorylation activity is calcium-independent. Functionally, receptor-like kinase involved in the control of pollen germination and pollen tube polar growth. Can phosphorylate ROPGEF1 in vitro. In Arabidopsis thaliana (Mouse-ear cress), this protein is Pollen receptor-like kinase 3.